Here is a 524-residue protein sequence, read N- to C-terminus: Glutamyl-tRNA(Gln) amidotransferase subunit A (524 aa).

Active-site charge relay system residues include K109 and S184. S208 functions as the Acyl-ester intermediate in the catalytic mechanism.

It belongs to the amidase family. GatA subfamily. In terms of assembly, heterotrimer of A, B and C subunits.

It catalyses the reaction L-glutamyl-tRNA(Gln) + L-glutamine + ATP + H2O = L-glutaminyl-tRNA(Gln) + L-glutamate + ADP + phosphate + H(+). In terms of biological role, allows the formation of correctly charged Gln-tRNA(Gln) through the transamidation of misacylated Glu-tRNA(Gln) in organisms which lack glutaminyl-tRNA synthetase. The reaction takes place in the presence of glutamine and ATP through an activated gamma-phospho-Glu-tRNA(Gln). This is Glutamyl-tRNA(Gln) amidotransferase subunit A from Tropheryma whipplei (strain Twist) (Whipple's bacillus).